The sequence spans 176 residues: ATP-dependent protease subunit HslV (176 aa).

Thr6 is an active-site residue. Na(+) contacts are provided by Ser161, Cys164, and Thr167.

Belongs to the peptidase T1B family. HslV subfamily. A double ring-shaped homohexamer of HslV is capped on each side by a ring-shaped HslU homohexamer. The assembly of the HslU/HslV complex is dependent on binding of ATP.

The protein resides in the cytoplasm. It carries out the reaction ATP-dependent cleavage of peptide bonds with broad specificity.. Allosterically activated by HslU binding. Protease subunit of a proteasome-like degradation complex believed to be a general protein degrading machinery. This Thermosipho africanus (strain TCF52B) protein is ATP-dependent protease subunit HslV.